A 366-amino-acid chain; its full sequence is Chorismate synthase (366 aa).

Residues R48 and R54 each coordinate NADP(+). FMN-binding positions include 131-133, 243-244, G288, 303-307, and R329; these read RAS, NA, and KPTPS.

Belongs to the chorismate synthase family. As to quaternary structure, homotetramer. FMNH2 is required as a cofactor.

The catalysed reaction is 5-O-(1-carboxyvinyl)-3-phosphoshikimate = chorismate + phosphate. The protein operates within metabolic intermediate biosynthesis; chorismate biosynthesis; chorismate from D-erythrose 4-phosphate and phosphoenolpyruvate: step 7/7. Its function is as follows. Catalyzes the anti-1,4-elimination of the C-3 phosphate and the C-6 proR hydrogen from 5-enolpyruvylshikimate-3-phosphate (EPSP) to yield chorismate, which is the branch point compound that serves as the starting substrate for the three terminal pathways of aromatic amino acid biosynthesis. This reaction introduces a second double bond into the aromatic ring system. This Bartonella quintana (strain Toulouse) (Rochalimaea quintana) protein is Chorismate synthase.